A 98-amino-acid chain; its full sequence is Protein S100-A13 (98 aa).

Residues 18–53 (TTFFTFARQEGRKDSLSVNEFKELVTQQLPHLLKDV) enclose the EF-hand domain. Positions 32, 37, 64, 66, 68, 70, and 75 each coordinate Ca(2+). A Phosphoserine modification is found at S32.

Belongs to the S-100 family. As to quaternary structure, homodimer. Part of a copper-dependent multiprotein complex containing S100A13, FGF1 and SYT1. Interacts with FGF1 and SYT1. Interacts with IL1A. As to expression, expressed in heart and skeletal muscle.

The protein localises to the cytoplasm. It localises to the secreted. Plays a role in the export of proteins that lack a signal peptide and are secreted by an alternative pathway. Binds two calcium ions per subunit. Binds one copper ion. Binding of one copper ion does not interfere with calcium binding. Required for the copper-dependent stress-induced export of IL1A and FGF1. The calcium-free protein binds to lipid vesicles containing phosphatidylserine, but not to vesicles containing phosphatidylcholine. This is Protein S100-A13 (S100A13) from Homo sapiens (Human).